Here is a 445-residue protein sequence, read N- to C-terminus: Glucose-6-phosphate isomerase (445 aa).

Residue E287 is the Proton donor of the active site. Residues H308 and K422 contribute to the active site.

This sequence belongs to the GPI family.

It localises to the cytoplasm. It catalyses the reaction alpha-D-glucose 6-phosphate = beta-D-fructose 6-phosphate. The protein operates within carbohydrate biosynthesis; gluconeogenesis. It participates in carbohydrate degradation; glycolysis; D-glyceraldehyde 3-phosphate and glycerone phosphate from D-glucose: step 2/4. Functionally, catalyzes the reversible isomerization of glucose-6-phosphate to fructose-6-phosphate. The protein is Glucose-6-phosphate isomerase of Bacteroides thetaiotaomicron (strain ATCC 29148 / DSM 2079 / JCM 5827 / CCUG 10774 / NCTC 10582 / VPI-5482 / E50).